We begin with the raw amino-acid sequence, 260 residues long: MAIQHPYHLVDQSPWPLDGAFSGLMMTSGNVLWFHTQKTNLTLVGFLLLITNMVNWWRDIIRKANFQGSHTAIVNKGMRYGMILFITSEVCFFFAFFWAFFHSSLAPSVEIGVAWPPSGITPLNPFLVPLLNTGVLLSSGVTLSWSHHSILAGNRTESIQALFLTVALGSYFTALQAWEYIDAPFTIADSVYGSTFFVATGFHGLQVIIGTTFLMVCLFRTAGRHFSTHHHFGFEAAAWYWHFVDVVWFVLYWLIYWWGA.

6 helical membrane-spanning segments follow: residues 41–61 (LTLV…RDII), 81–101 (GMIL…WAFF), 133–153 (TGVL…ILAG), 161–181 (ALFL…WEYI), 196–216 (FFVA…FLMV), and 238–258 (AWYW…IYWW).

It belongs to the cytochrome c oxidase subunit 3 family. In terms of assembly, component of the cytochrome c oxidase (complex IV, CIV), a multisubunit enzyme composed of a catalytic core of 3 subunits and several supernumerary subunits. The complex exists as a monomer or a dimer and forms supercomplexes (SCs) in the inner mitochondrial membrane with ubiquinol-cytochrome c oxidoreductase (cytochrome b-c1 complex, complex III, CIII).

It is found in the mitochondrion inner membrane. The catalysed reaction is 4 Fe(II)-[cytochrome c] + O2 + 8 H(+)(in) = 4 Fe(III)-[cytochrome c] + 2 H2O + 4 H(+)(out). Its function is as follows. Component of the cytochrome c oxidase, the last enzyme in the mitochondrial electron transport chain which drives oxidative phosphorylation. The respiratory chain contains 3 multisubunit complexes succinate dehydrogenase (complex II, CII), ubiquinol-cytochrome c oxidoreductase (cytochrome b-c1 complex, complex III, CIII) and cytochrome c oxidase (complex IV, CIV), that cooperate to transfer electrons derived from NADH and succinate to molecular oxygen, creating an electrochemical gradient over the inner membrane that drives transmembrane transport and the ATP synthase. Cytochrome c oxidase is the component of the respiratory chain that catalyzes the reduction of oxygen to water. Electrons originating from reduced cytochrome c in the intermembrane space (IMS) are transferred via the dinuclear copper A center (CU(A)) of subunit 2 and heme A of subunit 1 to the active site in subunit 1, a binuclear center (BNC) formed by heme A3 and copper B (CU(B)). The BNC reduces molecular oxygen to 2 water molecules using 4 electrons from cytochrome c in the IMS and 4 protons from the mitochondrial matrix. The polypeptide is Cytochrome c oxidase subunit 3 (COIII) (Strongylocentrotus purpuratus (Purple sea urchin)).